The following is a 91-amino-acid chain: Probable Fe(2+)-trafficking protein (91 aa).

It belongs to the Fe(2+)-trafficking protein family.

In terms of biological role, could be a mediator in iron transactions between iron acquisition and iron-requiring processes, such as synthesis and/or repair of Fe-S clusters in biosynthetic enzymes. In Burkholderia cenocepacia (strain ATCC BAA-245 / DSM 16553 / LMG 16656 / NCTC 13227 / J2315 / CF5610) (Burkholderia cepacia (strain J2315)), this protein is Probable Fe(2+)-trafficking protein.